A 204-amino-acid chain; its full sequence is Protein Mis18-alpha (204 aa).

A phosphoserine mark is found at serine 13, serine 16, and serine 17. One can recognise a Mis18 domain in the interval proline 51–leucine 149. Zn(2+) contacts are provided by cysteine 56, cysteine 59, cysteine 112, and cysteine 115. Residue lysine 133 forms a Glycyl lysine isopeptide (Lys-Gly) (interchain with G-Cter in SUMO2) linkage. Serine 204 is modified (phosphoserine).

The protein belongs to the mis18 family. Homodimer, and heterodimer with OIP5/MIS18B. Identified in a complex containing MIS18A, OIP5/MIS18B, MIS18BP1, RBBP7 and RBBP4.

It is found in the nucleus. The protein localises to the chromosome. Its subcellular location is the centromere. Functionally, required for recruitment of CENPA to centromeres and normal chromosome segregation during mitosis. The polypeptide is Protein Mis18-alpha (Mis18a) (Mus musculus (Mouse)).